The following is a 486-amino-acid chain: Cardiolipin synthase A (486 aa).

2 consecutive transmembrane segments (helical) span residues 3–23 and 38–58; these read IFYD…IANI and MSWL…WFFF. PLD phosphodiesterase domains lie at 219–246 and 399–426; these read LDVR…VDPY and KKGL…DMRS. Catalysis depends on residues His224, Lys226, Asp231, His404, Lys406, and Asp411.

It belongs to the phospholipase D family. Cardiolipin synthase subfamily. ClsA sub-subfamily.

Its subcellular location is the cell inner membrane. The enzyme catalyses 2 a 1,2-diacyl-sn-glycero-3-phospho-(1'-sn-glycerol) = a cardiolipin + glycerol. Its function is as follows. Catalyzes the reversible phosphatidyl group transfer from one phosphatidylglycerol molecule to another to form cardiolipin (CL) (diphosphatidylglycerol) and glycerol. This chain is Cardiolipin synthase A, found in Buchnera aphidicola subsp. Schizaphis graminum (strain Sg).